The chain runs to 444 residues: MEAADPNNNLTITSPSTLLSNPTQPPAQPLKLRDSCHACASSKVKCHKEKPTCSRCRKRGITCEYFAHRRPGRKQENRAKDTTNHVERQENTTAVEMLDLNWPAPDFSTQTSIANDNLDVFHDIFVPPDQLNNGLTDFTIDFDDFDIQSDPAEIASLPDTSSLESMFVTSPTAPTDTITPNVITPNVGLSVLEGLPDTTHHTQAINLASYIQTPPTEKTPDSRIKHLEENKDPCMTRALSFLTQLSESTSRICKTSETGCSGTNKKSLPESLDGIIAENRRLLEAMSNILQCRCSEDDDLLCIQAIVASKILNLYASAIEIKPSPARVGSGVSTHTTAGQYEPQVEQQLSTRTHPQLASGRDPIRMAAQSVLGELHRVQRLLSQMLQKSKDNETMRRKGSENGLRAVADKVPLTSGVSFGSIEADLRYKLGKLSIEIITLLRGA.

A compositionally biased stretch (polar residues) spans 1-22; sequence MEAADPNNNLTITSPSTLLSNP. Residues 1–31 form a disordered region; it reads MEAADPNNNLTITSPSTLLSNPTQPPAQPLK. Residues 36-63 constitute a DNA-binding region (zn(2)-C6 fungal-type); it reads CHACASSKVKCHKEKPTCSRCRKRGITC. Positions 326 to 348 are disordered; sequence ARVGSGVSTHTTAGQYEPQVEQQ. A compositionally biased stretch (polar residues) spans 331–348; that stretch reads GVSTHTTAGQYEPQVEQQ.

It localises to the nucleus. Functionally, transcription factor that, with ptaR1 and ptaR3, coregulates the expression of the gene cluster that mediates the biosynthesis of pestheic acid, a diphenyl ether which is a biosynthetic precursor of the unique chloropupukeananes. The polypeptide is Pestheic acid cluster transcriptional regulator 2 (Pestalotiopsis fici (strain W106-1 / CGMCC3.15140)).